A 760-amino-acid chain; its full sequence is Serine/threonine-protein kinase Haspin homolog ALK1 (760 aa).

Residues S76 and S79 each carry the phosphoserine modification. 4 disordered regions span residues 76-100 (SDASLNVTTGNNTSRKTTSNSKKRW), 123-153 (SSFTSESHKDRESRNVLQQKRKSLQSYSSLD), 187-264 (DDIS…STVS), and 362-408 (KRNS…CSYS). Polar residues predominate over residues 78 to 95 (ASLNVTTGNNTSRKTTSN). The KEN box motif lies at 200-202 (KEN). Positions 209-220 (KKNSSIASTSSE) are enriched in polar residues. The D box signature appears at 224 to 232 (RTPLKPLVN). The segment covering 237–250 (PTSQPQQQQPLYNA) has biased composition (polar residues). The segment covering 251–264 (SLSSRRSSISSTVS) has biased composition (low complexity). Residues 362 to 386 (KRNSQSSLKHKSSHASLQKFKRNKG) show a composition bias toward basic residues. Over residues 398–408 (NSSNDDSCSYS) the composition is skewed to low complexity. The Protein kinase domain maps to 468–760 (NCDIKRILNP…NTGDLLKLYK (293 aa)). ATP is bound by residues 474–482 (ILNPAKGDV) and K510.

The protein belongs to the protein kinase superfamily. Ser/Thr protein kinase family. Haspin subfamily. Periodically phosphorylated during the cell cycle with a phosphorylation peak during mitosis and hyperphosphorylated after DNA damage.

The catalysed reaction is L-seryl-[protein] + ATP = O-phospho-L-seryl-[protein] + ADP + H(+). It carries out the reaction L-threonyl-[protein] + ATP = O-phospho-L-threonyl-[protein] + ADP + H(+). Its function is as follows. Serine/threonine haspin-like protein kinase involved in cell cycle regulation. The protein is Serine/threonine-protein kinase Haspin homolog ALK1 (ALK1) of Saccharomyces cerevisiae (strain ATCC 204508 / S288c) (Baker's yeast).